The following is a 182-amino-acid chain: Small ribosomal subunit protein uS5 (182 aa).

The 64-residue stretch at 16-79 folds into the S5 DRBM domain; the sequence is FVDRLVHINR…ESAKRGMIYV (64 aa).

This sequence belongs to the universal ribosomal protein uS5 family. In terms of assembly, part of the 30S ribosomal subunit. Contacts proteins S4 and S8.

With S4 and S12 plays an important role in translational accuracy. Functionally, located at the back of the 30S subunit body where it stabilizes the conformation of the head with respect to the body. This chain is Small ribosomal subunit protein uS5, found in Bartonella henselae (strain ATCC 49882 / DSM 28221 / CCUG 30454 / Houston 1) (Rochalimaea henselae).